The following is a 149-amino-acid chain: MADQLTDDQIAEFKEAFSLFDKDGDGCITTKELGTVMRSLGQNPTEAELQDMINEVDADGNGTIDFPEFLNLMARKMKDTDSEEELKEAFRVFDKDQNGFISAAELRHVMTNLGEKLTDEEVDEMIREADVDGDGQINYDEFVKVMMAK.

Position 2 is an N-acetylalanine (Ala-2). EF-hand domains lie at 8–43 (DQIA…LGQN), 44–79 (PTEA…KMKD), 81–116 (DSEE…LGEK), and 117–149 (LTDE…MMAK). 14 residues coordinate Ca(2+): Asp-21, Asp-23, Asp-25, Cys-27, Glu-32, Asp-57, Asp-59, Asn-61, Thr-63, Glu-68, Asp-94, Asp-96, Asn-98, and Glu-105. An N6,N6,N6-trimethyllysine modification is found at Lys-116. The Ca(2+) site is built by Asp-130, Asp-132, Asp-134, Gln-136, and Glu-141.

The protein belongs to the calmodulin family.

Functionally, calmodulin mediates the control of a large number of enzymes, ion channels and other proteins by Ca(2+). Among the enzymes to be stimulated by the calmodulin-Ca(2+) complex are a number of protein kinases and phosphatases. The chain is Calmodulin-3 (CAM3) from Oryza sativa subsp. indica (Rice).